Here is a 401-residue protein sequence, read N- to C-terminus: Tyrosine--tRNA ligase (401 aa).

The 'HIGH' region signature appears at 41-50; that stretch reads PSRPDLHLGH. Residues 225–229 carry the 'KMSKS' region motif; it reads KMSKS. Lys-228 contributes to the ATP binding site. Residues 334 to 395 form the S4 RNA-binding domain; the sequence is KNIVDLLVEI…GKRKFYRISG (62 aa).

The protein belongs to the class-I aminoacyl-tRNA synthetase family. TyrS type 2 subfamily. Homodimer.

It localises to the cytoplasm. It carries out the reaction tRNA(Tyr) + L-tyrosine + ATP = L-tyrosyl-tRNA(Tyr) + AMP + diphosphate + H(+). Catalyzes the attachment of tyrosine to tRNA(Tyr) in a two-step reaction: tyrosine is first activated by ATP to form Tyr-AMP and then transferred to the acceptor end of tRNA(Tyr). This Thermotoga maritima (strain ATCC 43589 / DSM 3109 / JCM 10099 / NBRC 100826 / MSB8) protein is Tyrosine--tRNA ligase.